A 239-amino-acid chain; its full sequence is Ribonuclease HII (239 aa).

The RNase H type-2 domain maps to 30–221; that stretch reads GPVAGVDEVG…VRRLVTAGTP (192 aa). D36, E37, and D130 together coordinate a divalent metal cation.

The protein belongs to the RNase HII family. Mn(2+) is required as a cofactor. Mg(2+) serves as cofactor.

Its subcellular location is the cytoplasm. It catalyses the reaction Endonucleolytic cleavage to 5'-phosphomonoester.. Functionally, endonuclease that specifically degrades the RNA of RNA-DNA hybrids. This is Ribonuclease HII from Mycobacterium sp. (strain JLS).